A 278-amino-acid chain; its full sequence is Phosphatidylglycerol--prolipoprotein diacylglyceryl transferase (278 aa).

4 helical membrane-spanning segments follow: residues 19 to 39 (WYGILMATGVLVATLMAINEG), 49 to 69 (FIDFLLWAVPIGFIGARIYYV), 86 to 106 (IWNGGIAIYGGLIAGLIVLLI), and 112 to 132 (MLPPFLMLDIIAPGVMAAQVI). Position 134 (Arg-134) interacts with a 1,2-diacyl-sn-glycero-3-phospho-(1'-sn-glycerol). Transmembrane regions (helical) follow at residues 174–194 (QPTYLYESTLNLIGLILILSL), 204–224 (GEIFLSYVIWYSAVRFFVEGM), and 235–255 (IRVSQALSLILFFGAIILWIY).

This sequence belongs to the Lgt family.

Its subcellular location is the cell membrane. It catalyses the reaction L-cysteinyl-[prolipoprotein] + a 1,2-diacyl-sn-glycero-3-phospho-(1'-sn-glycerol) = an S-1,2-diacyl-sn-glyceryl-L-cysteinyl-[prolipoprotein] + sn-glycerol 1-phosphate + H(+). It participates in protein modification; lipoprotein biosynthesis (diacylglyceryl transfer). In terms of biological role, catalyzes the transfer of the diacylglyceryl group from phosphatidylglycerol to the sulfhydryl group of the N-terminal cysteine of a prolipoprotein, the first step in the formation of mature lipoproteins. The chain is Phosphatidylglycerol--prolipoprotein diacylglyceryl transferase from Lactobacillus johnsonii (strain CNCM I-12250 / La1 / NCC 533).